Reading from the N-terminus, the 272-residue chain is Shikimate dehydrogenase (NADP(+)) (272 aa).

Shikimate-binding positions include 14 to 16 (SKS) and threonine 61. Lysine 65 serves as the catalytic Proton acceptor. Glutamate 77 contacts NADP(+). Shikimate contacts are provided by asparagine 86 and aspartate 102. Residues 126–130 (GAGGA), 149–154 (NRTVSR), and methionine 213 each bind NADP(+). Tyrosine 215 serves as a coordination point for shikimate. Glycine 237 serves as a coordination point for NADP(+).

It belongs to the shikimate dehydrogenase family. Homodimer.

It carries out the reaction shikimate + NADP(+) = 3-dehydroshikimate + NADPH + H(+). It functions in the pathway metabolic intermediate biosynthesis; chorismate biosynthesis; chorismate from D-erythrose 4-phosphate and phosphoenolpyruvate: step 4/7. Functionally, involved in the biosynthesis of the chorismate, which leads to the biosynthesis of aromatic amino acids. Catalyzes the reversible NADPH linked reduction of 3-dehydroshikimate (DHSA) to yield shikimate (SA). This chain is Shikimate dehydrogenase (NADP(+)), found in Shigella dysenteriae serotype 1 (strain Sd197).